We begin with the raw amino-acid sequence, 320 residues long: Transcription factor NAI1 (320 aa).

Residues 53 to 105 (TKQMKTNNNMNSTSSSPSSSSSSGSRTSQVISFGSPDTKTNPVETSLNFSNQV) are disordered. Residues 58 to 80 (TNNNMNSTSSSPSSSSSSGSRTS) are compositionally biased toward low complexity. Polar residues predominate over residues 81-105 (QVISFGSPDTKTNPVETSLNFSNQV). A bHLH domain is found at 128–177 (HLLKEHVLAERKRRQKLNERLIALSALLPGLKKTDKATVLEDAIKHLKQL).

Homodimer. In terms of tissue distribution, expressed constitutively in roots, leaves, stems, and flowers.

The protein resides in the nucleus. Its function is as follows. Transcription activator that regulates the expression of at least NAI2, PYK10 and PBP1. Required for and mediates the formation of endoplasmic reticulum bodies (ER bodies). Involved in the symbiotic interactions with the endophytes of the Sebacinaceae fungus family, such as Piriformospora indica and Sebacina. In Arabidopsis thaliana (Mouse-ear cress), this protein is Transcription factor NAI1 (NAI1).